The chain runs to 126 residues: B3 domain-containing protein At5g54067 (126 aa).

The segment at residues 20-118 is a DNA-binding region (TF-B3); the sequence is SDIVGNVVLP…KFVVLNFQYS (99 aa).

The protein localises to the nucleus. This chain is B3 domain-containing protein At5g54067, found in Arabidopsis thaliana (Mouse-ear cress).